The following is a 254-amino-acid chain: Alcohol dehydrogenase (254 aa).

Residue 10 to 33 (FVAGLGGIGLDTSRELVKRDLKNL) participates in NAD(+) binding. S138 provides a ligand contact to substrate. The active-site Proton acceptor is the Y151.

Belongs to the short-chain dehydrogenases/reductases (SDR) family. Homodimer.

The enzyme catalyses a primary alcohol + NAD(+) = an aldehyde + NADH + H(+). It carries out the reaction a secondary alcohol + NAD(+) = a ketone + NADH + H(+). The protein is Alcohol dehydrogenase (Adh) of Drosophila madeirensis (Fruit fly).